A 1084-amino-acid chain; its full sequence is AP-3 complex subunit beta-1 (1084 aa).

Positions 1 to 11 are enriched in polar residues; the sequence is MSSNSFAYNEQ. The tract at residues 1–26 is disordered; it reads MSSNSFAYNEQSGGGEATELGQEATS. Serine 276 and serine 609 each carry phosphoserine. The segment at 663-800 is disordered; that stretch reads AGKAKKENPD…KEKKTKQERN (138 aa). The segment covering 666-677 has biased composition (basic and acidic residues); the sequence is AKKENPDKKFYS. Acidic residues predominate over residues 678–717; the sequence is ESEEEEDSSESSSDSESESGSESGEDEEDDRSGDSAEDSG. Positions 718 to 729 are enriched in low complexity; that stretch reads ESGSEPEAGKGR. Positions 738-753 are enriched in basic and acidic residues; the sequence is GRGDSKDVDKEKENSK. Serine 742 is modified (phosphoserine). The segment covering 754-767 has biased composition (low complexity); that stretch reads TSESSSGESSSIEE. Over residues 768 to 781 the composition is skewed to acidic residues; it reads SSSDSESESESESE. Residues 782–800 are compositionally biased toward basic and acidic residues; that stretch reads SESRKVTKEKEKKTKQERN.

The protein belongs to the adaptor complexes large subunit family. In terms of assembly, adaptor protein complex 3 (AP-3) is a heterotetramer composed of two large adaptins (delta-type subunit AP3D1 and beta-type subunit AP3B1 or AP3B2), a medium adaptin (mu-type subunit AP3M1 or AP3M2) and a small adaptin (sigma-type subunit APS1 or AP3S2). AP-3 associates with the BLOC-1 complex. Interacts with KIF3A; interaction is direct; interaction is impaired by pyrophosphorylation of AP3B1. In terms of processing, phosphorylated on serine residues. Post-translationally, pyrophosphorylation by 5-diphosphoinositol pentakisphosphate (5-IP7) impairs interaction with KIF3A. Serine pyrophosphorylation is achieved by Mg(2+)-dependent, but enzyme independent transfer of a beta-phosphate from a inositol pyrophosphate to a pre-phosphorylated serine residue.

It localises to the cytoplasmic vesicle. It is found in the clathrin-coated vesicle membrane. The protein localises to the golgi apparatus. In terms of biological role, subunit of non-clathrin- and clathrin-associated adaptor protein complex 3 (AP-3) that plays a role in protein sorting in the late-Golgi/trans-Golgi network (TGN) and/or endosomes. The AP complexes mediate both the recruitment of clathrin to membranes and the recognition of sorting signals within the cytosolic tails of transmembrane cargo molecules. AP-3 appears to be involved in the sorting of a subset of transmembrane proteins targeted to lysosomes and lysosome-related organelles. In concert with the BLOC-1 complex, AP-3 is required to target cargos into vesicles assembled at cell bodies for delivery into neurites and nerve terminals. The sequence is that of AP-3 complex subunit beta-1 (AP3B1) from Bos taurus (Bovine).